A 432-amino-acid chain; its full sequence is Adenylosuccinate synthetase (432 aa).

GTP contacts are provided by residues 12–18 (GDEGKGK) and 40–42 (GHT). The Proton acceptor role is filled by D13. Residues D13 and G40 each contribute to the Mg(2+) site. Residues 13 to 16 (DEGK), 38 to 41 (NAGH), T132, R146, Q226, T241, and R305 contribute to the IMP site. H41 serves as the catalytic Proton donor. 301-307 (TVTGRKR) contributes to the substrate binding site. GTP is bound by residues R307, 333-335 (KLD), and 415-417 (STS).

This sequence belongs to the adenylosuccinate synthetase family. Homodimer. It depends on Mg(2+) as a cofactor.

Its subcellular location is the cytoplasm. The enzyme catalyses IMP + L-aspartate + GTP = N(6)-(1,2-dicarboxyethyl)-AMP + GDP + phosphate + 2 H(+). Its pathway is purine metabolism; AMP biosynthesis via de novo pathway; AMP from IMP: step 1/2. Its function is as follows. Plays an important role in the de novo pathway of purine nucleotide biosynthesis. Catalyzes the first committed step in the biosynthesis of AMP from IMP. The sequence is that of Adenylosuccinate synthetase from Sinorhizobium medicae (strain WSM419) (Ensifer medicae).